A 108-amino-acid polypeptide reads, in one-letter code: Nucleoid-associated protein BP1550 (108 aa).

Residues 87–108 (SQEKMASVTAGMPLPPGMKLPF) are disordered. Pro residues predominate over residues 99-108 (PLPPGMKLPF).

Belongs to the YbaB/EbfC family. Homodimer.

It is found in the cytoplasm. It localises to the nucleoid. Functionally, binds to DNA and alters its conformation. May be involved in regulation of gene expression, nucleoid organization and DNA protection. The protein is Nucleoid-associated protein BP1550 of Bordetella pertussis (strain Tohama I / ATCC BAA-589 / NCTC 13251).